Here is a 159-residue protein sequence, read N- to C-terminus: MNISIISIGKLKEKYLKQGIAEYLKRLSSYAKVEVIELPDEKAPENLSEAEMLIVKEKEGVRILDKISDDTHVIALAIEGKQKSSEQFAESLDCLATYGKSKIAFVIGGSLGLSTEVMKRSNESLSFSKMTLPHQLMRLVLLEQIYRAFRINRGEPYHK.

S-adenosyl-L-methionine is bound by residues leucine 76, glycine 108, and 127 to 132 (FSKMTL).

This sequence belongs to the RNA methyltransferase RlmH family. In terms of assembly, homodimer.

It is found in the cytoplasm. The enzyme catalyses pseudouridine(1915) in 23S rRNA + S-adenosyl-L-methionine = N(3)-methylpseudouridine(1915) in 23S rRNA + S-adenosyl-L-homocysteine + H(+). Functionally, specifically methylates the pseudouridine at position 1915 (m3Psi1915) in 23S rRNA. In Bacillus cytotoxicus (strain DSM 22905 / CIP 110041 / 391-98 / NVH 391-98), this protein is Ribosomal RNA large subunit methyltransferase H.